The chain runs to 304 residues: Acetyl-coenzyme A carboxylase carboxyl transferase subunit beta (304 aa).

Residues 23 to 292 (VWTKCDSCGQ…PNPEAPREGV (270 aa)) form the CoA carboxyltransferase N-terminal domain. Zn(2+)-binding residues include cysteine 27, cysteine 30, cysteine 46, and cysteine 49. The C4-type zinc-finger motif lies at 27 to 49 (CDSCGQVLYRAELERNLEVCPKC). Positions 284 to 304 (NPEAPREGVVVPPVPDQEPEA) are disordered. The span at 295-304 (PPVPDQEPEA) shows a compositional bias: pro residues.

This sequence belongs to the AccD/PCCB family. Acetyl-CoA carboxylase is a heterohexamer composed of biotin carboxyl carrier protein (AccB), biotin carboxylase (AccC) and two subunits each of ACCase subunit alpha (AccA) and ACCase subunit beta (AccD). The cofactor is Zn(2+).

The protein resides in the cytoplasm. It catalyses the reaction N(6)-carboxybiotinyl-L-lysyl-[protein] + acetyl-CoA = N(6)-biotinyl-L-lysyl-[protein] + malonyl-CoA. Its pathway is lipid metabolism; malonyl-CoA biosynthesis; malonyl-CoA from acetyl-CoA: step 1/1. Functionally, component of the acetyl coenzyme A carboxylase (ACC) complex. Biotin carboxylase (BC) catalyzes the carboxylation of biotin on its carrier protein (BCCP) and then the CO(2) group is transferred by the transcarboxylase to acetyl-CoA to form malonyl-CoA. The chain is Acetyl-coenzyme A carboxylase carboxyl transferase subunit beta from Escherichia coli O6:K15:H31 (strain 536 / UPEC).